Consider the following 216-residue polypeptide: Uracil phosphoribosyltransferase (216 aa).

5-phospho-alpha-D-ribose 1-diphosphate-binding positions include Arg-85, Arg-110, and 135–143 (DPMVATGYS). Uracil-binding positions include Ile-200 and 205–207 (GDA). Asp-206 is a 5-phospho-alpha-D-ribose 1-diphosphate binding site.

The protein belongs to the UPRTase family. It depends on Mg(2+) as a cofactor.

It catalyses the reaction UMP + diphosphate = 5-phospho-alpha-D-ribose 1-diphosphate + uracil. Its pathway is pyrimidine metabolism; UMP biosynthesis via salvage pathway; UMP from uracil: step 1/1. Allosterically activated by GTP. In terms of biological role, catalyzes the conversion of uracil and 5-phospho-alpha-D-ribose 1-diphosphate (PRPP) to UMP and diphosphate. The polypeptide is Uracil phosphoribosyltransferase (Burkholderia multivorans (strain ATCC 17616 / 249)).